A 131-amino-acid chain; its full sequence is GFLGGGYGGGLGLGGYGGGYGLGGGLGGGLGAIGLAAAPAVGIAAAPAIGIAAAPATLVRTRVVPGPARLVQPPPVVQKQVIQPPPIVQTRLIEPPAQLVQGPPQVIHEQTPALIKTAVPAPSFGYKSLLH.

Repeat copies occupy residues 37-40 (AAPA), 45-48 (AAPA), and 53-56 (AAPA).

Functionally, component of the cuticle of migratory locust which contains more than 100 different structural proteins. In Locusta migratoria (Migratory locust), this protein is Cuticle protein 79, isoform B.